The chain runs to 106 residues: Nucleoid-associated protein Nham_0463 (106 aa).

Belongs to the YbaB/EbfC family. As to quaternary structure, homodimer.

It is found in the cytoplasm. Its subcellular location is the nucleoid. In terms of biological role, binds to DNA and alters its conformation. May be involved in regulation of gene expression, nucleoid organization and DNA protection. In Nitrobacter hamburgensis (strain DSM 10229 / NCIMB 13809 / X14), this protein is Nucleoid-associated protein Nham_0463.